The chain runs to 245 residues: CMRF35-like molecule 3 (245 aa).

The first 18 residues, 1–18 (MWQFPALLFLFLPGCCTA), serve as a signal peptide directing secretion. An Ig-like V-type domain is found at 19–124 (QDPVTGPEEV…TDPMFKVNVN (106 aa)). The Extracellular segment spans residues 19–189 (QDPVTGPEEV…FIWSLLSSIS (171 aa)). Residues Cys40 and Cys108 are joined by a disulfide bond. 2 important for maintaining surface expression and for interaction with FCER1G regions span residues 177–182 (NSLFIW) and 189–198 (SFLLMVFVVV). The chain crosses the membrane as a helical span at residues 190-210 (FLLMVFVVVPLLLSMLSAVLW). Residues 211-245 (VNRPQRHYGGGEIGLVETHRSDALDGEKHFPGDEK) are Cytoplasmic-facing.

This sequence belongs to the CD300 family. Interacts with FCER1G; the interaction may be indirect. Interacts with TLR9. As to expression, highly expressed in bone marrow-derived mast cells and macrophages, peripheral blood monocytes and CD11c+ cells, with weaker expression detected in CD11b cells in bone marrow and peripheral blood. Not detected in B220+ cells in bone marrow or spleen, in Thy-1.2+ or CD3+ cells in peripheral blood, spleen or thymus, or in NK1.1+ cells in spleen (at protein level). Widely expressed in various tissues including heart, liver, spleen, lung, kidney, brain, bone marrow, thymus, axillary lymph node and mesenteric lymph node. Highly expressed in macrophage cell lines J774.1 and RAW 264.7 and in mast cell line MC/9. Weak expression detected in B-lineage cell lines WEHI-231 and A20 and in dendritic cell line DC2.4. Not detected in other myeloid cell lines or T-lineage cell lines.

Its subcellular location is the cell membrane. It is found in the early endosome. The protein localises to the lysosome. In terms of biological role, acts as an activating receptor inducing cytokine production in mast cells. Can act as a positive regulator of TLR9 signaling in macrophages, leading to enhanced production of pro-inflammatory cytokines. In Mus musculus (Mouse), this protein is CMRF35-like molecule 3.